The following is a 711-amino-acid chain: Early transcription factor 82 kDa subunit (711 aa).

The protein belongs to the poxviridae VETF large subunit family. In terms of assembly, heterodimer of a 70 kDa and a 82 kDa subunit. Part of the early transcription complex composed of ETF, RAP94, and the DNA-directed RNA polymerase.

Acts with RNA polymerase to initiate transcription from early gene promoters. Is recruited by the RPO-associated protein of 94 kDa (RAP94) to form the early transcription complex, which also contains the core RNA polymerase. ETF heterodimer binds to early gene promoters. The chain is Early transcription factor 82 kDa subunit (VETFL) from Oryctolagus cuniculus (Rabbit).